Reading from the N-terminus, the 478-residue chain is Isoeugenol monooxygenase (478 aa).

Residues H167, H218, H282, and H471 each contribute to the Fe cation site.

It belongs to the carotenoid oxygenase family. Requires Fe(2+) as cofactor.

It catalyses the reaction (E)-isoeugenol + O2 = vanillin + acetaldehyde. With respect to regulation, inhibited by Co(2+), Ni(2+) and Zn(2+), which may inhibit enzyme activity by replacing iron in the catalytic residues. Inhibited by incubation with high concentrations of the iron chelators 1,10-phenanthroline and Tiron. However, iron is not completely removed by the chelators, suggesting that iron is tightly bound to the enzyme. Functionally, involved in isoeugenol degradation. Catalyzes the oxidative cleavage of the side chain double-bond of isoeugenol to form vanillin and acetaldehyde. The sequence is that of Isoeugenol monooxygenase from Pseudomonas nitroreducens.